A 396-amino-acid polypeptide reads, in one-letter code: Ornithine aminotransferase (396 aa).

The residue at position 255 (Lys255) is an N6-(pyridoxal phosphate)lysine.

It belongs to the class-III pyridoxal-phosphate-dependent aminotransferase family. OAT subfamily. It depends on pyridoxal 5'-phosphate as a cofactor.

It localises to the cytoplasm. The enzyme catalyses a 2-oxocarboxylate + L-ornithine = L-glutamate 5-semialdehyde + an L-alpha-amino acid. It functions in the pathway amino-acid biosynthesis; L-proline biosynthesis; L-glutamate 5-semialdehyde from L-ornithine: step 1/1. Its function is as follows. Catalyzes the interconversion of ornithine to glutamate semialdehyde. The sequence is that of Ornithine aminotransferase from Staphylococcus epidermidis (strain ATCC 12228 / FDA PCI 1200).